Consider the following 438-residue polypeptide: V-type ATP synthase beta chain (438 aa).

This sequence belongs to the ATPase alpha/beta chains family.

Produces ATP from ADP in the presence of a proton gradient across the membrane. The V-type beta chain is a regulatory subunit. The polypeptide is V-type ATP synthase beta chain (Chlamydia abortus (strain DSM 27085 / S26/3) (Chlamydophila abortus)).